Reading from the N-terminus, the 205-residue chain is Phosphoribosyl-dephospho-CoA transferase (205 aa).

Active-site residues include Asp-134 and Asp-136.

It belongs to the MdcG family.

It catalyses the reaction apo-[malonate decarboxylase ACP] + 2'-(5''-triphospho-alpha-D-ribosyl)-3'-dephospho-CoA = holo-[malonate decarboxylase ACP] + diphosphate. Functionally, transfers 2'-(5-triphosphoribosyl)-3'-dephosphocoenzyme-A to the apo-[acyl-carrier-protein] of the malonate decarboxylase to yield holo-[acyl-carrier-protein]. This is Phosphoribosyl-dephospho-CoA transferase from Klebsiella pneumoniae subsp. pneumoniae (strain ATCC 700721 / MGH 78578).